We begin with the raw amino-acid sequence, 219 residues long: Phosphatidylserine decarboxylase proenzyme (219 aa).

S188 functions as the Schiff-base intermediate with substrate; via pyruvic acid in the catalytic mechanism. Residue S188 is modified to Pyruvic acid (Ser); by autocatalysis.

It belongs to the phosphatidylserine decarboxylase family. PSD-A subfamily. As to quaternary structure, heterodimer of a large membrane-associated beta subunit and a small pyruvoyl-containing alpha subunit. The cofactor is pyruvate. In terms of processing, is synthesized initially as an inactive proenzyme. Formation of the active enzyme involves a self-maturation process in which the active site pyruvoyl group is generated from an internal serine residue via an autocatalytic post-translational modification. Two non-identical subunits are generated from the proenzyme in this reaction, and the pyruvate is formed at the N-terminus of the alpha chain, which is derived from the carboxyl end of the proenzyme. The post-translation cleavage follows an unusual pathway, termed non-hydrolytic serinolysis, in which the side chain hydroxyl group of the serine supplies its oxygen atom to form the C-terminus of the beta chain, while the remainder of the serine residue undergoes an oxidative deamination to produce ammonia and the pyruvoyl prosthetic group on the alpha chain.

The protein localises to the cell membrane. The enzyme catalyses a 1,2-diacyl-sn-glycero-3-phospho-L-serine + H(+) = a 1,2-diacyl-sn-glycero-3-phosphoethanolamine + CO2. Its pathway is phospholipid metabolism; phosphatidylethanolamine biosynthesis; phosphatidylethanolamine from CDP-diacylglycerol: step 2/2. Functionally, catalyzes the formation of phosphatidylethanolamine (PtdEtn) from phosphatidylserine (PtdSer). In Citrifermentans bemidjiense (strain ATCC BAA-1014 / DSM 16622 / JCM 12645 / Bem) (Geobacter bemidjiensis), this protein is Phosphatidylserine decarboxylase proenzyme.